Consider the following 170-residue polypeptide: NADH-quinone oxidoreductase subunit B (170 aa).

4 residues coordinate [4Fe-4S] cluster: Cys37, Cys38, Cys102, and Cys131.

This sequence belongs to the complex I 20 kDa subunit family. As to quaternary structure, NDH-1 is composed of 14 different subunits. Subunits NuoB, C, D, E, F, and G constitute the peripheral sector of the complex. The cofactor is [4Fe-4S] cluster.

Its subcellular location is the cell inner membrane. It catalyses the reaction a quinone + NADH + 5 H(+)(in) = a quinol + NAD(+) + 4 H(+)(out). In terms of biological role, NDH-1 shuttles electrons from NADH, via FMN and iron-sulfur (Fe-S) centers, to quinones in the respiratory chain. The immediate electron acceptor for the enzyme in this species is believed to be ubiquinone. Couples the redox reaction to proton translocation (for every two electrons transferred, four hydrogen ions are translocated across the cytoplasmic membrane), and thus conserves the redox energy in a proton gradient. This chain is NADH-quinone oxidoreductase subunit B, found in Geotalea daltonii (strain DSM 22248 / JCM 15807 / FRC-32) (Geobacter daltonii).